The sequence spans 1009 residues: Rho-type GTPase-activating protein 2 (1009 aa).

2 consecutive LIM zinc-binding domains span residues 11 to 68 (SLCV…DCSD) and 69 to 129 (KCTN…LLRK). Positions 143 to 155 (KEDFPIKLPERSV) are enriched in basic and acidic residues. Disordered regions lie at residues 143-228 (KEDF…RTVS), 358-433 (TKEN…LSRS), 449-608 (TSEM…DATD), 664-709 (TREK…ASPK), and 723-780 (QVGD…DYTP). Residues 162-196 (TRINGKSDVSTNNTAISKNLVSSNEDQQLTPQVLV) are compositionally biased toward polar residues. The segment covering 212 to 222 (DNSKDREETSS) has biased composition (basic and acidic residues). Polar residues-rich tracts occupy residues 363 to 385 (KSSQGIQTSTSKSMNHVSPITRT) and 399 to 414 (LRLSDNGSFSRPQTAD). A compositionally biased stretch (basic residues) spans 481–491 (NIRKSKAKKNP). Composition is skewed to polar residues over residues 493-510 (SRGQSDSTIYNTLPQHGN) and 522-553 (QSSLGSISKKQNSNDTATNRRINGSFTSSSSG). Basic and acidic residues predominate over residues 664-682 (TREKDKQSASSRESLEQKE). 2 stretches are compositionally biased toward polar residues: residues 683–707 (NIATSITVKSPSSNSDRKGSISNAS) and 728–749 (ESQQRSPNSSSGGTTNIAQKEI). S763 is modified (phosphoserine). Residues 788 to 1006 (SSLQARCAYE…FILGNYRDIF (219 aa)) enclose the Rho-GAP domain.

GTPase-activating protein (GAP) for CDC42 and/or RHO1. The polypeptide is Rho-type GTPase-activating protein 2 (RGA2) (Saccharomyces cerevisiae (strain ATCC 204508 / S288c) (Baker's yeast)).